The following is a 361-amino-acid chain: UDP-3-O-acylglucosamine N-acyltransferase (361 aa).

The active-site Proton acceptor is the histidine 253.

The protein belongs to the transferase hexapeptide repeat family. LpxD subfamily. In terms of assembly, homotrimer.

It carries out the reaction a UDP-3-O-[(3R)-3-hydroxyacyl]-alpha-D-glucosamine + a (3R)-hydroxyacyl-[ACP] = a UDP-2-N,3-O-bis[(3R)-3-hydroxyacyl]-alpha-D-glucosamine + holo-[ACP] + H(+). It participates in bacterial outer membrane biogenesis; LPS lipid A biosynthesis. Functionally, catalyzes the N-acylation of UDP-3-O-acylglucosamine using 3-hydroxyacyl-ACP as the acyl donor. Is involved in the biosynthesis of lipid A, a phosphorylated glycolipid that anchors the lipopolysaccharide to the outer membrane of the cell. The protein is UDP-3-O-acylglucosamine N-acyltransferase of Burkholderia pseudomallei (strain 668).